The chain runs to 105 residues: Prokineticin-1 (105 aa).

Positions 1 to 19 (MRGAVQVFIMLLLATVSDC) are cleaved as a signal peptide. 5 cysteine pairs are disulfide-bonded: C26/C38, C32/C50, C37/C78, C60/C86, and C80/C96.

Belongs to the AVIT (prokineticin) family.

It localises to the secreted. Potently contracts gastrointestinal (GI) smooth muscle. Induces proliferation, migration and fenestration (the formation of membrane discontinuities) in capillary endothelial cells derived from endocrine glands. Has little or no effect on a variety of other endothelial and non-endothelial cell types. Induces proliferation and differentiation, but not migration, of enteric neural crest cells. Directly influences neuroblastoma progression by promoting the proliferation and migration of neuroblastoma cells. Positively regulates PTGS2 expression and prostaglandin synthesis. May play a role in placentation. May play a role in normal and pathological testis angiogenesis. This chain is Prokineticin-1 (Prok1), found in Rattus norvegicus (Rat).